Here is a 263-residue protein sequence, read N- to C-terminus: Small ribosomal subunit protein uS2m (263 aa).

Residues 1–15 (MLSRKLSPEQLVARR) constitute a mitochondrion transit peptide.

This sequence belongs to the universal ribosomal protein uS2 family. Component of the mitochondrial small ribosomal subunit (mt-SSU). Mature yeast 74S mitochondrial ribosomes consist of a small (37S) and a large (54S) subunit. The 37S small subunit contains a 15S ribosomal RNA (15S mt-rRNA) and at least 32 different proteins. The 54S large subunit contains a 21S rRNA (21S mt-rRNA) and at least 45 different proteins.

It localises to the mitochondrion. Functionally, component of the mitochondrial ribosome (mitoribosome), a dedicated translation machinery responsible for the synthesis of mitochondrial genome-encoded proteins, including at least some of the essential transmembrane subunits of the mitochondrial respiratory chain. The mitoribosomes are attached to the mitochondrial inner membrane and translation products are cotranslationally integrated into the membrane. This is Small ribosomal subunit protein uS2m from Schizosaccharomyces pombe (strain 972 / ATCC 24843) (Fission yeast).